The chain runs to 236 residues: Biosynthetic peptidoglycan transglycosylase (236 aa).

The helical transmembrane segment at 12 to 31 threads the bilayer; it reads ALLWFAAGSVLVVLVLRWVP.

This sequence belongs to the glycosyltransferase 51 family.

It localises to the cell inner membrane. The enzyme catalyses [GlcNAc-(1-&gt;4)-Mur2Ac(oyl-L-Ala-gamma-D-Glu-L-Lys-D-Ala-D-Ala)](n)-di-trans,octa-cis-undecaprenyl diphosphate + beta-D-GlcNAc-(1-&gt;4)-Mur2Ac(oyl-L-Ala-gamma-D-Glu-L-Lys-D-Ala-D-Ala)-di-trans,octa-cis-undecaprenyl diphosphate = [GlcNAc-(1-&gt;4)-Mur2Ac(oyl-L-Ala-gamma-D-Glu-L-Lys-D-Ala-D-Ala)](n+1)-di-trans,octa-cis-undecaprenyl diphosphate + di-trans,octa-cis-undecaprenyl diphosphate + H(+). It functions in the pathway cell wall biogenesis; peptidoglycan biosynthesis. Its function is as follows. Peptidoglycan polymerase that catalyzes glycan chain elongation from lipid-linked precursors. This is Biosynthetic peptidoglycan transglycosylase from Pseudomonas savastanoi pv. phaseolicola (strain 1448A / Race 6) (Pseudomonas syringae pv. phaseolicola (strain 1448A / Race 6)).